The following is a 386-amino-acid chain: S-adenosylmethionine synthase (386 aa).

His16 serves as a coordination point for ATP. Residue Asp18 participates in Mg(2+) binding. Position 44 (Glu44) interacts with K(+). L-methionine is bound by residues Glu57 and Gln100. Residues 100 to 110 form a flexible loop region; that stretch reads QSSDIAQGVDR. Residues 165-167, Asp240, 246-247, Ala263, and Lys267 each bind ATP; these read DAK and RK. Asp240 is a binding site for L-methionine. Lys271 is an L-methionine binding site.

Belongs to the AdoMet synthase family. Homotetramer; dimer of dimers. Mg(2+) is required as a cofactor. It depends on K(+) as a cofactor.

The protein localises to the cytoplasm. The catalysed reaction is L-methionine + ATP + H2O = S-adenosyl-L-methionine + phosphate + diphosphate. The protein operates within amino-acid biosynthesis; S-adenosyl-L-methionine biosynthesis; S-adenosyl-L-methionine from L-methionine: step 1/1. Functionally, catalyzes the formation of S-adenosylmethionine (AdoMet) from methionine and ATP. The overall synthetic reaction is composed of two sequential steps, AdoMet formation and the subsequent tripolyphosphate hydrolysis which occurs prior to release of AdoMet from the enzyme. This Francisella philomiragia subsp. philomiragia (strain ATCC 25017 / CCUG 19701 / FSC 153 / O#319-036) protein is S-adenosylmethionine synthase.